The following is a 443-amino-acid chain: MREIVHIQGGQCGNQIGAKFWEVMSDEHGVDPTGTYHGDSDLQLERINVYFNEATGGRYVPRAILMDLEPGTMDSVRAGPFGQLFRPDNFVFGQTGAGNNWAKGHYTEGAELIDSVLDVVRKEAESCDCMQGFQLTHSMGGGTGAGMGTLLISKIREEYPDRVMSTYSVIPSPKVSDTVVEPYNATLSVHQLVENADQCFALDNEALYDICFRTLKLTTPTYGDLNHLIAAAVCGTTCCLRFPGQLNCDLRKLAVNMVPFPRLHFFMVGYAPLTSRGSQQYRALTVPELTQQCFDAKNMMCAADPRHGRYLTCAVLFRGRMSSKEVDEQMLNVVNKSSSYFVEWIPNNVKASICDIPPKGLKMATTFVGNTTAVQETWKRVAEQFTVMFRRKAFLHWYTGEGMDEMEFTEAESNMNDLVSEYQQYQDATADEEGEFDEDEMEG.

Positions 11, 69, 138, 142, 143, 144, 204, and 226 each coordinate GTP. Glu69 lines the Mg(2+) pocket.

Belongs to the tubulin family. In terms of assembly, dimer of alpha and beta chains. A typical microtubule is a hollow water-filled tube with an outer diameter of 25 nm and an inner diameter of 15 nM. Alpha-beta heterodimers associate head-to-tail to form protofilaments running lengthwise along the microtubule wall with the beta-tubulin subunit facing the microtubule plus end conferring a structural polarity. Microtubules usually have 13 protofilaments but different protofilament numbers can be found in some organisms and specialized cells. The cofactor is Mg(2+).

The protein localises to the cytoplasm. The protein resides in the cytoskeleton. Functionally, tubulin is the major constituent of microtubules, a cylinder consisting of laterally associated linear protofilaments composed of alpha- and beta-tubulin heterodimers. Microtubules grow by the addition of GTP-tubulin dimers to the microtubule end, where a stabilizing cap forms. Below the cap, tubulin dimers are in GDP-bound state, owing to GTPase activity of alpha-tubulin. The sequence is that of Tubulin beta chain from Thalassiosira weissflogii (Marine diatom).